The sequence spans 121 residues: uncharacterized protein (121 aa).

This is an uncharacterized protein from Escherichia coli (strain K12).